The primary structure comprises 214 residues: Soluble inorganic pyrophosphatase (214 aa).

Residues 1 to 20 (MSEEDKTAASAEQPKRAPKL) are disordered. Residues lysine 64, arginine 78, and tyrosine 90 each coordinate substrate. The Mg(2+) site is built by aspartate 100, aspartate 105, and aspartate 137. Tyrosine 174 is a binding site for substrate.

This sequence belongs to the PPase family. Mg(2+) serves as cofactor.

It localises to the cytoplasm. It carries out the reaction diphosphate + H2O = 2 phosphate + H(+). This is Soluble inorganic pyrophosphatase (IPP) from Zea mays (Maize).